The chain runs to 100 residues: MGETSVTLIGLIVGLLFGLSGIATLLSLMSDVVSDAQAQLSQLGVASTLVMLVIALILIIKVRVLSALIVGAVIGAVLNLVLQANGVNILEMLRAAVFGT.

A run of 3 helical transmembrane segments spans residues Thr7–Leu28, Ala38–Ile60, and Leu65–Val87.

Its subcellular location is the cell membrane. This is an uncharacterized protein from Archaeoglobus fulgidus (strain ATCC 49558 / DSM 4304 / JCM 9628 / NBRC 100126 / VC-16).